Here is a 450-residue protein sequence, read N- to C-terminus: Bicarbonate-binding protein CmpA (450 aa).

The tat-type signal signal peptide spans 1–36 (MNEFQPVNRRQFLFTLGATAASAILLKGCGNPPSSS).

Belongs to the CmpA/NrtA family. In terms of assembly, the complex is composed of two ATP-binding proteins (CmpC and CmpD), a transmembrane protein (CmpB) and a solute-binding protein (CmpA). Post-translationally, predicted to be exported by the Tat system. The position of the signal peptide cleavage has not been experimentally proven. In terms of processing, the N-terminus is blocked.

It localises to the cell inner membrane. Its function is as follows. Part of the ABC transporter complex CmpABCD involved in bicarbonate transport. Binds bicarbonate with high affinity. The polypeptide is Bicarbonate-binding protein CmpA (cmpA) (Synechococcus elongatus (strain ATCC 33912 / PCC 7942 / FACHB-805) (Anacystis nidulans R2)).